The sequence spans 339 residues: UPF0324 membrane protein SpyM3_0740 (339 aa).

The next 9 helical transmembrane spans lie at 7–24 (KLPG…AWYL), 28–50 (FPII…FYHH), 57–79 (GISF…GLNL), 84–106 (AVGM…VAYG), 118–140 (ATLV…APVI), 150–172 (AISV…GQLL), 256–275 (FILF…SLGV), 290–307 (FIVM…LVKL), and 314–336 (AILL…QLSL).

This sequence belongs to the UPF0324 family.

It is found in the cell membrane. The polypeptide is UPF0324 membrane protein SpyM3_0740 (Streptococcus pyogenes serotype M3 (strain ATCC BAA-595 / MGAS315)).